The following is a 448-amino-acid chain: Hyaluronidase conohyal-Cn1 (448 aa).

Residues 1–18 form the signal peptide; the sequence is MRAVVVVTGLVVVVVATA. The propeptide occupies 19–33; the sequence is LSLPNHDVKSATSSR. The segment at 26–55 is disordered; sequence VKSATSSRSSSDYQGSSGDDCDEGLPPPDQ. Positions 31 to 43 are enriched in low complexity; it reads SSRSSSDYQGSSG. The cysteines at positions 67 and 344 are disulfide-linked. Asn141 is a glycosylation site (N-linked (GlcNAc...) asparagine). The active-site Proton donor is the Glu151. Residues Asn169 and Asn361 are each glycosylated (N-linked (GlcNAc...) asparagine). 3 disulfide bridges follow: Cys369–Cys380, Cys374–Cys413, and Cys415–Cys424. Residues 413-424 enclose the EGF-like domain; it reads CRCYSAWEGACC.

This sequence belongs to the glycosyl hydrolase 56 family. As to expression, expressed by the venom duct.

The protein localises to the secreted. The enzyme catalyses Random hydrolysis of (1-&gt;4)-linkages between N-acetyl-beta-D-glucosamine and D-glucuronate residues in hyaluronate.. Functionally, hyaluronidase catalyzes the hydrolysis of hyaluronic acid (HA), an anionic, nonsulfated glycosaminoglycan distributed widely throughout connective, epithelial, and neural tissues. In venom, they are known to enhance diffusion of the venom by degrading the extracellular matrix. This Conus consors (Singed cone) protein is Hyaluronidase conohyal-Cn1.